We begin with the raw amino-acid sequence, 137 residues long: Peptide methionine sulfoxide reductase MsrB (137 aa).

The region spanning 7 to 129 (AEELKKKLSE…NSASLAFSDE (123 aa)) is the MsrB domain. Zn(2+)-binding residues include Cys-46, Cys-49, Cys-95, and Cys-98. The active-site Nucleophile is Cys-118.

This sequence belongs to the MsrB Met sulfoxide reductase family. The cofactor is Zn(2+).

The catalysed reaction is L-methionyl-[protein] + [thioredoxin]-disulfide + H2O = L-methionyl-(R)-S-oxide-[protein] + [thioredoxin]-dithiol. The polypeptide is Peptide methionine sulfoxide reductase MsrB (Salmonella arizonae (strain ATCC BAA-731 / CDC346-86 / RSK2980)).